Reading from the N-terminus, the 202-residue chain is Ribosome maturation factor RimM (202 aa).

In terms of domain architecture, PRC barrel spans 100–195 (ADEWYPKDLI…YLTLDPPGGL (96 aa)).

The protein belongs to the RimM family. Binds ribosomal protein uS19.

It localises to the cytoplasm. Its function is as follows. An accessory protein needed during the final step in the assembly of 30S ribosomal subunit, possibly for assembly of the head region. Essential for efficient processing of 16S rRNA. May be needed both before and after RbfA during the maturation of 16S rRNA. It has affinity for free ribosomal 30S subunits but not for 70S ribosomes. The polypeptide is Ribosome maturation factor RimM (Bifidobacterium longum (strain NCC 2705)).